The following is a 336-amino-acid chain: Fructose-1,6-bisphosphatase class 1 (336 aa).

Mg(2+) is bound by residues Glu-92, Asp-115, Leu-117, and Asp-118. Residues 118–121 (DGSS), Asn-211, Tyr-244, 262–264 (YLY), and Lys-274 each bind substrate. Position 280 (Glu-280) interacts with Mg(2+).

The protein belongs to the FBPase class 1 family. Homotetramer. It depends on Mg(2+) as a cofactor.

Its subcellular location is the cytoplasm. The catalysed reaction is beta-D-fructose 1,6-bisphosphate + H2O = beta-D-fructose 6-phosphate + phosphate. It functions in the pathway carbohydrate biosynthesis; gluconeogenesis. In Vibrio atlanticus (strain LGP32) (Vibrio splendidus (strain Mel32)), this protein is Fructose-1,6-bisphosphatase class 1.